Consider the following 514-residue polypeptide: Membrane-bound lytic murein transglycosylase F (514 aa).

Positions 1–30 are cleaved as a signal peptide; that stretch reads MKKLKINYLFIGILTLLLAAALWPSIPWFG. The interval 31–269 is non-LT domain; that stretch reads KTENHIAAIQ…RIEEKYLGHG (239 aa). The tract at residues 270–514 is LT domain; that stretch reads DDFDYVDTRS…LFTPQKKEEK (245 aa). Glutamate 314 is an active-site residue.

In the N-terminal section; belongs to the bacterial solute-binding protein 3 family. It in the C-terminal section; belongs to the transglycosylase Slt family.

It is found in the cell outer membrane. The enzyme catalyses Exolytic cleavage of the (1-&gt;4)-beta-glycosidic linkage between N-acetylmuramic acid (MurNAc) and N-acetylglucosamine (GlcNAc) residues in peptidoglycan, from either the reducing or the non-reducing ends of the peptidoglycan chains, with concomitant formation of a 1,6-anhydrobond in the MurNAc residue.. In terms of biological role, murein-degrading enzyme that degrades murein glycan strands and insoluble, high-molecular weight murein sacculi, with the concomitant formation of a 1,6-anhydromuramoyl product. Lytic transglycosylases (LTs) play an integral role in the metabolism of the peptidoglycan (PG) sacculus. Their lytic action creates space within the PG sacculus to allow for its expansion as well as for the insertion of various structures such as secretion systems and flagella. This Salmonella paratyphi B (strain ATCC BAA-1250 / SPB7) protein is Membrane-bound lytic murein transglycosylase F.